Consider the following 518-residue polypeptide: Glutamate--cysteine ligase (518 aa).

The protein belongs to the glutamate--cysteine ligase type 1 family. Type 1 subfamily.

It carries out the reaction L-cysteine + L-glutamate + ATP = gamma-L-glutamyl-L-cysteine + ADP + phosphate + H(+). It functions in the pathway sulfur metabolism; glutathione biosynthesis; glutathione from L-cysteine and L-glutamate: step 1/2. The polypeptide is Glutamate--cysteine ligase (Escherichia coli O8 (strain IAI1)).